The chain runs to 514 residues: 2-isopropylmalate synthase (514 aa).

The Pyruvate carboxyltransferase domain maps to 8–270 (IRIFDTTLRD…DCGVVTEQLF (263 aa)). Positions 17, 205, 207, and 241 each coordinate Mn(2+). Residues 394–514 (RLVNLSVQCS…KEEEQEKEGI (121 aa)) form a regulatory domain region.

This sequence belongs to the alpha-IPM synthase/homocitrate synthase family. LeuA type 1 subfamily. As to quaternary structure, homodimer. Mn(2+) is required as a cofactor.

The protein resides in the cytoplasm. The catalysed reaction is 3-methyl-2-oxobutanoate + acetyl-CoA + H2O = (2S)-2-isopropylmalate + CoA + H(+). It functions in the pathway amino-acid biosynthesis; L-leucine biosynthesis; L-leucine from 3-methyl-2-oxobutanoate: step 1/4. Functionally, catalyzes the condensation of the acetyl group of acetyl-CoA with 3-methyl-2-oxobutanoate (2-ketoisovalerate) to form 3-carboxy-3-hydroxy-4-methylpentanoate (2-isopropylmalate). The protein is 2-isopropylmalate synthase of Nitratidesulfovibrio vulgaris (strain DSM 19637 / Miyazaki F) (Desulfovibrio vulgaris).